The chain runs to 205 residues: D-alanine--D-alanine ligase (205 aa).

The ATP-grasp domain occupies 111–205; it reads KHVLKSLGID…LGRAIGTMEF (95 aa). 139–190 contributes to the ATP binding site; sequence MPYPFVIKPICGGSTIGVHAIFSRSEYLDLSVHADALEGRMLVEEYIPGQEV.

Belongs to the D-alanine--D-alanine ligase family. Mg(2+) is required as a cofactor. Mn(2+) serves as cofactor.

It is found in the cytoplasm. The catalysed reaction is 2 D-alanine + ATP = D-alanyl-D-alanine + ADP + phosphate + H(+). It functions in the pathway cell wall biogenesis; peptidoglycan biosynthesis. Functionally, cell wall formation. This is D-alanine--D-alanine ligase (ddl) from Anaplasma centrale.